Consider the following 348-residue polypeptide: Organic solute transporter alpha-like protein 3 (348 aa).

Residues 1 to 49 are Extracellular-facing; it reads MAKEHGAMRSVLNLIGSVMLPQDTSNCSDRHDTPSAPEFLSHLQPFQTV. The N-linked (GlcNAc...) asparagine glycan is linked to Asn26. Residues 50-70 traverse the membrane as a helical segment; that stretch reads LLSIASFSTTIVLCLSLIHWF. Residues 71–84 lie on the Cytoplasmic side of the membrane; sequence YVYKYVSIEKRRNK. A helical transmembrane segment spans residues 85-105; that stretch reads LYWLIAVFPVACSCSFIAMCV. Over 106–109 the chain is Extracellular; sequence PRTA. Residues 110-130 traverse the membrane as a helical segment; that stretch reads VILTCIGVLYYLMCLFVIVSL. The Cytoplasmic portion of the chain corresponds to 131–180; the sequence is ARHLFGGRESFSTCLQYDDRPIDFRSPPFCCIIPKLPTARSTEKNIRRLE. The helical transmembrane segment at 181-201 threads the bilayer; sequence WCVLQAPIVRSIIIFLDVVAV. The Extracellular segment spans residues 202–213; sequence AEMREDATPYIR. Residues 214-234 form a helical membrane-spanning segment; it reads YSDMASLCSLLLAIFGVHTLA. Residues 235 to 240 lie on the Cytoplasmic side of the membrane; the sequence is RVTSNK. Residues 241–261 form a helical membrane-spanning segment; the sequence is LSAYCFMSMFRLVDISLLFFS. The Extracellular portion of the chain corresponds to 262-291; that stretch reads AQQPMIFQNVLLRFNLISCGPLLNAQENAY. Residues 292-312 form a helical membrane-spanning segment; sequence FVCNFIITCEMLLLSVLATWL. Residues 313-348 are Cytoplasmic-facing; that stretch reads LAPRHNAMFDAYRPSMALSETTASLNETEQSMILDH.

The protein belongs to the OST-alpha family.

Its subcellular location is the cell membrane. Its function is as follows. Probable transporter. In Caenorhabditis elegans, this protein is Organic solute transporter alpha-like protein 3 (osta-3).